Reading from the N-terminus, the 351-residue chain is Alcohol dehydrogenase 2 (351 aa).

Positions 47, 70, 101, 104, 107, 115, and 157 each coordinate Zn(2+). Residues G181–G187, D205, K209, V271–L273, and R343 contribute to the NAD(+) site.

It belongs to the zinc-containing alcohol dehydrogenase family. As to quaternary structure, homotetramer. It depends on Zn(2+) as a cofactor.

The enzyme catalyses a primary alcohol + NAD(+) = an aldehyde + NADH + H(+). It carries out the reaction a secondary alcohol + NAD(+) = a ketone + NADH + H(+). In Caenorhabditis elegans, this protein is Alcohol dehydrogenase 2 (sodh-2).